The chain runs to 501 residues: Solute carrier family 2, facilitated glucose transporter member 5 (501 aa).

Met-1 carries the post-translational modification N-acetylmethionine. Over Met-1 to Ala-18 the chain is Cytoplasmic. The chain crosses the membrane as a helical span at residues Leu-19 to Val-39. A D-fructose-binding site is contributed by Tyr-32. At Asn-40 to Thr-68 the chain is on the extracellular side. Residue Asn-51 is glycosylated (N-linked (GlcNAc...) asparagine). The helical transmembrane segment at Leu-69–Pro-91 threads the bilayer. The Cytoplasmic segment spans residues Leu-92–Arg-98. The chain crosses the membrane as a helical span at residues Lys-99–Ser-119. The Extracellular portion of the chain corresponds to Lys-120 to Glu-126. The chain crosses the membrane as a helical span at residues Met-127 to Tyr-149. Residues Leu-150–Ala-161 lie on the Cytoplasmic side of the membrane. A helical membrane pass occupies residues Leu-162–Leu-182. Residue Gln-167 participates in D-fructose binding. Topologically, residues Arg-183 to Trp-192 are extracellular. Residues Pro-193–Phe-213 form a helical membrane-spanning segment. At Pro-214–Gln-277 the chain is on the cytoplasmic side. Residues Val-278–Tyr-298 traverse the membrane as a helical segment. Residues Gln-288 and Ile-296–Tyr-298 each bind D-fructose. Residues Tyr-299–Asp-313 are Extracellular-facing. The helical transmembrane segment at Val-314–Phe-334 threads the bilayer. Residues Val-335–Arg-342 are Cytoplasmic-facing. The chain crosses the membrane as a helical span at residues Ala-343–Leu-363. Topologically, residues Ala-364 to Trp-371 are extracellular. Residues Met-372 to Ile-394 form a helical membrane-spanning segment. His-387 provides a ligand contact to D-fructose. At Pro-395 to Tyr-412 the chain is on the cytoplasmic side. The chain crosses the membrane as a helical span at residues Met-413–Ile-433. His-419 to Trp-420 provides a ligand contact to D-fructose. Over Gln-434–Ala-439 the chain is Extracellular. The chain crosses the membrane as a helical span at residues Tyr-440–Val-460. Over Pro-461 to Leu-501 the chain is Cytoplasmic.

This sequence belongs to the major facilitator superfamily. Sugar transporter (TC 2.A.1.1) family. Glucose transporter subfamily.

It is found in the apical cell membrane. Its subcellular location is the cell membrane. The protein resides in the sarcolemma. It catalyses the reaction D-fructose(out) = D-fructose(in). In terms of biological role, functions as a fructose transporter that has only low activity with other monosaccharides. Can mediate the uptake of deoxyglucose, but with low efficiency. Essential for fructose uptake in the small intestine. Plays a role in the regulation of salt uptake and blood pressure in response to dietary fructose. Required for the development of high blood pressure in response to high dietary fructose intake. In Equus caballus (Horse), this protein is Solute carrier family 2, facilitated glucose transporter member 5.